We begin with the raw amino-acid sequence, 388 residues long: MKHLHRFFSSDASGGIILIIAAVLAMIMANSGATSGWYHDFLETPVQLRVGTLEINKNMLLWINDALMAVFFLLVGLEVKRELMQGSLASLRQAAFPVIAAIGGMIVPALLYLAFNYADPITREGWAIPAATDIAFALGVLALLGSRVPLALKIFLMALAIIDDLGAIIIIALFYTNDLSMASLGVAAVAIAVLAVLNLCGVRRTGVYILVGVVLWTAVLKSGVHATLAGVIVGFFIPLKEKHGRSPAKRLEHVLHPWVAYLILPLFAFANAGVSLQGVTLEGLTSILPLGIIAGLLIGKPLGISLFCWLALRLKLAHLPEGTTYQQIMAVGILCGIGFTMSIFIASLAFGSVDPELINWAKLGILVGSISSAVIGYSWLRVRLRPSV.

Over 1-11 (MKHLHRFFSSD) the chain is Cytoplasmic. Residues 12-31 (ASGGIILIIAAVLAMIMANS) traverse the membrane as a helical segment. Over 32–58 (GATSGWYHDFLETPVQLRVGTLEINKN) the chain is Periplasmic. A helical membrane pass occupies residues 59–80 (MLLWINDALMAVFFLLVGLEVK). The Cytoplasmic segment spans residues 81–96 (RELMQGSLASLRQAAF). A helical membrane pass occupies residues 97–116 (PVIAAIGGMIVPALLYLAFN). The Periplasmic segment spans residues 117–122 (YADPIT). Residues 123 to 130 (REGWAIPA) traverse the membrane as a helical segment. Topologically, residues 131–154 (ATDIAFALGVLALLGSRVPLALKI) are cytoplasmic. Residues 155–176 (FLMALAIIDDLGAIIIIALFYT) traverse the membrane as a helical segment. Residues 177–180 (NDLS) are Periplasmic-facing. The helical transmembrane segment at 181 to 200 (MASLGVAAVAIAVLAVLNLC) threads the bilayer. Topologically, residues 201 to 204 (GVRR) are cytoplasmic. The helical transmembrane segment at 205-222 (TGVYILVGVVLWTAVLKS) threads the bilayer. A topological domain (periplasmic) is located at residue G223. Residues 224–236 (VHATLAGVIVGFF) traverse the membrane as a helical segment. The Cytoplasmic portion of the chain corresponds to 237 to 253 (IPLKEKHGRSPAKRLEH). Residues 254 to 272 (VLHPWVAYLILPLFAFANA) traverse the membrane as a helical segment. Over 273 to 286 (GVSLQGVTLEGLTS) the chain is Periplasmic. Residues 287 to 310 (ILPLGIIAGLLIGKPLGISLFCWL) traverse the membrane as a helical segment. The Cytoplasmic segment spans residues 311–339 (ALRLKLAHLPEGTTYQQIMAVGILCGIGF). Residues 340–350 (TMSIFIASLAF) form a helical membrane-spanning segment. Residues 351–357 (GSVDPEL) lie on the Periplasmic side of the membrane. The chain crosses the membrane as a helical span at residues 358 to 380 (INWAKLGILVGSISSAVIGYSWL). Residues 381-388 (RVRLRPSV) lie on the Cytoplasmic side of the membrane.

This sequence belongs to the NhaA Na(+)/H(+) (TC 2.A.33) antiporter family.

It is found in the cell inner membrane. It catalyses the reaction Na(+)(in) + 2 H(+)(out) = Na(+)(out) + 2 H(+)(in). Its function is as follows. Na(+)/H(+) antiporter that extrudes sodium in exchange for external protons. This is Na(+)/H(+) antiporter NhaA from Escherichia coli O6:K15:H31 (strain 536 / UPEC).